A 111-amino-acid chain; its full sequence is MVLLHPILAESCTRYFLLLPSYTHPNHLFHFPSISFFFFFFFFFFSFRRNCLFRIVKDEVKYSGVYYYIHTKQDKETFLDLTFYFNCFCIPYNKKDLLFNVGVIRPLLDLQ.

Residues 27–47 traverse the membrane as a helical segment; sequence HLFHFPSISFFFFFFFFFFSF.

The protein resides in the membrane. This is an uncharacterized protein from Saccharomyces cerevisiae (strain ATCC 204508 / S288c) (Baker's yeast).